The primary structure comprises 377 residues: uncharacterized protein (377 aa).

This is an uncharacterized protein from Magallana gigas (Pacific oyster).